The sequence spans 797 residues: Interphotoreceptor matrix proteoglycan 1 (797 aa).

A signal peptide spans 1–20 (MYLETRRAIFVFWIFLQVQG). N-linked (GlcNAc...) asparagine glycosylation is found at asparagine 42, asparagine 143, asparagine 191, and asparagine 215. Residues 232–354 (EEQRVELSVS…QPEIYLTATD (123 aa)) enclose the SEA 1 domain. Threonine 403, threonine 421, threonine 432, and threonine 442 each carry an O-linked (GalNAc...) threonine glycan. The SEA 2 domain occupies 571–684 (RELVVFFSLR…YSLNIEPADQ (114 aa)). 2 N-linked (GlcNAc...) asparagine glycosylation sites follow: asparagine 592 and asparagine 616. The Heparin- and hyaluronan-binding motif lies at 621 to 629 (KQLEILNFR). 2 N-linked (GlcNAc...) asparagine glycosylation sites follow: asparagine 630 and asparagine 648.

In terms of processing, the N-terminus is blocked. Highly glycosylated (N- and O-linked carbohydrates and sialic acid). As to expression, expressed in the retina (at protein level). In the retina, specifically expressed by cone and rod photoreceptor cells. Localizes to cone and rod photoreceptor cells surrounding the interphotoreceptor matrix of the retina.

It localises to the cell projection. The protein resides in the cilium. The protein localises to the photoreceptor outer segment. Its subcellular location is the secreted. It is found in the extracellular space. It localises to the extracellular matrix. The protein resides in the interphotoreceptor matrix. The protein localises to the photoreceptor inner segment. Its function is as follows. Chondroitin sulfate-, heparin- and hyaluronan-binding protein. May serve to form a basic macromolecular scaffold comprising the insoluble interphotoreceptor matrix. The sequence is that of Interphotoreceptor matrix proteoglycan 1 from Homo sapiens (Human).